A 421-amino-acid chain; its full sequence is Testin (421 aa).

A PET domain is found at 92–199; that stretch reads MILTNPVAAK…GDVKLPCEMD (108 aa). The tract at residues 133–164 is disordered; the sequence is EKQPVAGSEGAQYRKKQLAKQLPAHDQDPSKC. A compositionally biased stretch (basic and acidic residues) spans 155–164; sequence PAHDQDPSKC. LIM zinc-binding domains lie at 234-297, 299-359, and 362-421; these read YFCY…CDSE, PRCA…NHAV, and QGCH…KMMS.

It belongs to the prickle / espinas / testin family. Interacts via LIM domain 1 with ZYX. Interacts (via LIM domain 3) with ENAH and VASP. Interacts with ALKBH4, talin, actin, alpha-actinin, GRIP1 and PXN. Interacts (via LIM domain 2) with ACTL7A (via N-terminus). Heterodimer with ACTL7A; the heterodimer interacts with ENAH to form a heterotrimer.

The protein resides in the cytoplasm. It localises to the cell junction. The protein localises to the focal adhesion. Functionally, scaffold protein that may play a role in cell adhesion, cell spreading and in the reorganization of the actin cytoskeleton. Plays a role in the regulation of cell proliferation. May act as a tumor suppressor. This chain is Testin (TES), found in Plecturocebus moloch (Dusky titi monkey).